Reading from the N-terminus, the 34-residue chain is Tau-theraphotoxin-Pc1c (34 aa).

Cystine bridges form between Cys-2/Cys-16, Cys-9/Cys-21, and Cys-15/Cys-28. Phe-34 bears the Phenylalanine amide mark.

It belongs to the neurotoxin 10 (Hwtx-1) family. 62 (Vatx) subfamily. In terms of tissue distribution, expressed by the venom gland.

The protein resides in the secreted. Selectively activates mammalian TRPV1, or capsaicin receptor, a non-selective cation channel expressed by sensory neurons of the pain pathway. Is more potent than VaTx1 and VaTx2. Interacts with distinct regions of the channel than capsaicin, since it only acts on the extracellular face of the channel, and capsaicin binds to the cytosolic side. Also activates avian TRPV1, which is insensitive to capsaicin. In mice, elicits pain-related behaviors, such as licking and flinching of the affected limb. The paw of toxin-injected mice shows substantial edema. This Psalmopoeus cambridgei (Trinidad chevron tarantula) protein is Tau-theraphotoxin-Pc1c.